Here is a 146-residue protein sequence, read N- to C-terminus: Ribonuclease H (146 aa).

The 143-residue stretch at 1 to 143 folds into the RNase H type-1 domain; it reads MKKRVTIYTD…CDELARQAIK (143 aa). Residues Asp-10, Glu-48, Asp-70, and Asp-135 each contribute to the Mg(2+) site.

It belongs to the RNase H family. As to quaternary structure, monomer. The cofactor is Mg(2+).

The protein localises to the cytoplasm. The enzyme catalyses Endonucleolytic cleavage to 5'-phosphomonoester.. Endonuclease that specifically degrades the RNA of RNA-DNA hybrids. This is Ribonuclease H from Chlorobium limicola (strain DSM 245 / NBRC 103803 / 6330).